The primary structure comprises 343 residues: Ricin B-like lectin R40G2 (343 aa).

A Ricin B-type lectin domain is found at 194-340; sequence TVRVFSAAGE…CEGDNQRWKI (147 aa).

Functionally, lectin which binds carbohydrates in vitro. Interacts through its lectin domain with glycan structures containing specific motifs. This chain is Ricin B-like lectin R40G2, found in Oryza sativa subsp. japonica (Rice).